A 274-amino-acid chain; its full sequence is UPF0173 metal-dependent hydrolase Adeh_1068 (274 aa).

Belongs to the UPF0173 family.

The chain is UPF0173 metal-dependent hydrolase Adeh_1068 from Anaeromyxobacter dehalogenans (strain 2CP-C).